A 622-amino-acid polypeptide reads, in one-letter code: Apical membrane antigen 1 (622 aa).

Residues 1–24 (MRKLYCVLLLSAFEFTYMINFGRG) form the signal peptide. The Extracellular portion of the chain corresponds to 25-546 (QNYWEHPYQN…EHKPTYDNMK (522 aa)). Intrachain disulfides connect Cys149–Cys302, Cys217–Cys247, Cys263–Cys275, Cys320–Cys418, and Cys337–Cys409. The N-linked (GlcNAc...) asparagine glycan is linked to Asn162. N-linked (GlcNAc...) asparagine glycans are attached at residues Asn286, Asn371, Asn421, Asn422, and Asn499. 3 disulfides stabilise this stretch: Cys443-Cys502, Cys490-Cys507, and Cys492-Cys509. A helical membrane pass occupies residues 547 to 567 (IIIASSAAVAVLATILMVYLY). The Cytoplasmic segment spans residues 568-622 (KRKGNAEKYDKMDQPQDYGKSTSRNDEMLDPEASFWGEEKRASHTTPVLMEKPYY). The tract at residues 577 to 607 (DKMDQPQDYGKSTSRNDEMLDPEASFWGEEK) is disordered.

This sequence belongs to the apicomplexan parasites AMA1 family.

Its subcellular location is the membrane. Functionally, involved in parasite invasion of erythrocytes. The chain is Apical membrane antigen 1 (AMA-1) from Plasmodium falciparum (isolate Camp / Malaysia).